The sequence spans 484 residues: Gasdermin-D (484 aa).

At Y37 the chain carries Phosphotyrosine. C56 bears the S-(2-succinyl)cysteine mark. 2 beta stranded membrane passes run 91–97 (QGSVELA) and 103–108 (KIAGGA). Residue Y158 is modified to Phosphotyrosine. Beta stranded transmembrane passes span 180–186 (GSGRFSL) and 191–197 (CLQGEGQ). The residue at position 185 (S185) is a Phosphoserine. S-(2-succinyl)cysteine is present on residues C191 and C268. C191 is lipidated: S-palmitoyl cysteine. The interval 277-296 (VPAEGAFTEDFQGLRAEVET) is linker helix loop. Position 309 is an S-(2-succinyl)cysteine (C309). The O-linked (GlcNAc) serine glycan is linked to S338. C467 carries the S-(2-succinyl)cysteine modification.

It belongs to the gasdermin family. In terms of assembly, homooligomer; homooligomeric ring-shaped pore complex containing 27-28 subunits when inserted in the membrane. Homooligomerization is promoted by the mTORC1 complex in macrophages. In response to a canonical inflammasome stimulus, such as nigericin, recruited to NLRP3 inflammasone with similar kinetics to that of uncleaved CASP1 precursor. Although this recruitment is also observed in the absence of PYCARD, it is more efficient in its presence. Cleavage at Asp-275 by CASP1 (mature and uncleaved precursor forms), CASP4, CASP5 or CASP8 relieves autoinhibition and is sufficient to initiate pyroptosis. Cleavage by CASP1 and CASP4 is not strictly dependent on the consensus cleavage site on GSDMD but depends on an exosite interface on CASP1 that recognizes and binds the Gasdermin-D, C-terminal (GSDMD-CT) part. Cleavage by CASP8 takes place following inactivation of MAP3K7/TAK1 by Yersinia toxin YopJ. Cleavage at Asp-87 by CASP3 or CASP7 inactivates the ability to mediate pyroptosis, but generates the Gasdermin-D, p13 chain, which translocates to the nucleus and acts as a transcription regulator. Cleavage by papain allergen generates the Gasdermin-D, p40 chain. Post-translationally, palmitoylated at Cys-191 by ZDHHC5 and ZDHHC9 in response to microbial infection and danger signals. Palmitoylation takes place before cleavage by caspases (CASP1, CASP4, CASP5 or CASP8) and is required for membrane translocation and pore formation. Depalmitoylated by LYPLA2. In terms of processing, succination of Cys-191 by the Krebs cycle intermediate fumarate, which leads to S-(2-succinyl)cysteine residues, inhibits processing by caspases, and ability to initiate pyroptosis. Succination modification is catalyzed by a non-enzymatic reaction caused by an accumulation of fumarate. Glycosylated: O-GlcNAcylation by OGT leads to reduced cleavage by CASP4 and decreased LPS-induced endothelial cell pyroptosis. Post-translationally, (Microbial infection) Cleaved and inactivated by Protease 3C from Human enterovirus 71 (EV71), preventing GSDMD-mediated pyroptosis. In terms of processing, (Microbial infection) Cleaved and inactivated by the 3C-like proteinase nsp5 from human coronavirus SARS-CoV-2, preventing GSDMD-mediated pyroptosis. (Microbial infection) Ubiquitinated by S.flexneri IpaH7.8, leading to its degradation by the proteasome. Expressed in the suprabasal cells of esophagus, as well as in the isthmus/neck, pit, and gland of the stomach, suggesting preferential expression in differentiating cells.

Its subcellular location is the cytoplasm. The protein localises to the cytosol. It localises to the inflammasome. It is found in the cell membrane. The protein resides in the secreted. Its subcellular location is the mitochondrion membrane. The protein localises to the nucleus. Its activity is regulated as follows. The full-length protein before cleavage is inactive: intramolecular interactions between N- and C-terminal domains mediate autoinhibition in the absence of activation signal. The intrinsic pyroptosis-inducing activity is carried by the released N-terminal moiety (Gasdermin-D, N-terminal) following cleavage by caspases CASP1, CASP4, CASP5 or CASP8. Cleavage at Asp-87 by CASP3 or CASP7 inactivates the ability to mediate pyroptosis. Homooligomerization and pore formation is specifically inhibited by VHH(GSDMD-1) and, to a lesser extent, VHH(GSDMD-2) nanobodies, protecting against excessive pyroptosis. Inhibited by small molecule NU6300, which covalently reacts with Cys-191, thereby preventing palmitoylation and pyroptosis. Functionally, precursor of a pore-forming protein that plays a key role in host defense against pathogen infection and danger signals. This form constitutes the precursor of the pore-forming protein: upon cleavage, the released N-terminal moiety (Gasdermin-D, N-terminal) binds to membranes and forms pores, triggering pyroptosis. Its function is as follows. Promotes pyroptosis in response to microbial infection and danger signals. Produced by the cleavage of gasdermin-D by inflammatory caspases CASP1, CASP4 or CASP5 in response to canonical, as well as non-canonical (such as cytosolic LPS) inflammasome activators. After cleavage, moves to the plasma membrane where it strongly binds to inner leaflet lipids, including monophosphorylated phosphatidylinositols, such as phosphatidylinositol 4-phosphate, bisphosphorylated phosphatidylinositols, such as phosphatidylinositol (4,5)-bisphosphate, as well as phosphatidylinositol (3,4,5)-bisphosphate, and more weakly to phosphatidic acid and phosphatidylserine. Homooligomerizes within the membrane and forms pores of 10-15 nanometers (nm) of inner diameter, allowing the release of mature interleukin-1 (IL1B and IL18) and triggering pyroptosis. Gasdermin pores also allow the release of mature caspase-7 (CASP7). In some, but not all, cells types, pyroptosis is followed by pyroptotic cell death, which is caused by downstream activation of ninjurin-1 (NINJ1), which mediates membrane rupture (cytolysis). Also forms pores in the mitochondrial membrane, resulting in release of mitochondrial DNA (mtDNA) into the cytosol. Gasdermin-D, N-terminal released from pyroptotic cells into the extracellular milieu rapidly binds to and kills both Gram-negative and Gram-positive bacteria, without harming neighboring mammalian cells, as it does not disrupt the plasma membrane from the outside due to lipid-binding specificity. Under cell culture conditions, also active against intracellular bacteria, such as Listeria monocytogenes. Also active in response to MAP3K7/TAK1 inactivation by Yersinia toxin YopJ, which triggers cleavage by CASP8 and subsequent activation. Required for mucosal tissue defense against enteric pathogens. Activation of the non-canonical inflammasome in brain endothelial cells can lead to excessive pyroptosis, leading to blood-brain barrier breakdown. Strongly binds to bacterial and mitochondrial lipids, including cardiolipin. Does not bind to unphosphorylated phosphatidylinositol, phosphatidylethanolamine nor phosphatidylcholine. Transcription coactivator produced by the cleavage by CASP3 or CASP7 in the upper small intestine in response to dietary antigens. Required to maintain food tolerance in small intestine: translocates to the nucleus and acts as a coactivator for STAT1 to induce the transcription of CIITA and MHC class II molecules, which in turn induce type 1 regulatory T (Tr1) cells in upper small intestine. In terms of biological role, produced by the cleavage by papain allergen. After cleavage, moves to the plasma membrane and homooligomerizes within the membrane and forms pores of 10-15 nanometers (nm) of inner diameter, allowing the specific release of mature interleukin-33 (IL33), promoting type 2 inflammatory immune response. This Homo sapiens (Human) protein is Gasdermin-D.